The primary structure comprises 147 residues: Transcriptional regulator MraZ (147 aa).

2 consecutive SpoVT-AbrB domains span residues 5 to 50 (AVAL…PLTA) and 79 to 122 (AQEE…SDAG).

The protein belongs to the MraZ family. Forms oligomers.

It is found in the cytoplasm. Its subcellular location is the nucleoid. The sequence is that of Transcriptional regulator MraZ from Azoarcus sp. (strain BH72).